A 555-amino-acid chain; its full sequence is Sesquiterpene synthase 31 (555 aa).

5 residues coordinate Mg(2+): aspartate 308, aspartate 312, aspartate 451, threonine 455, and glutamate 459. A DDXXD motif motif is present at residues 308-312 (DDTFD).

Belongs to the terpene synthase family. Tpsa subfamily. It depends on Mg(2+) as a cofactor. Requires Mn(2+) as cofactor. Expressed in stem and leaf trichomes. Detected in roots, fruits and flowers.

It is found in the cytoplasm. The catalysed reaction is (2E,6E)-farnesyl diphosphate = viridiflorene + diphosphate. It participates in secondary metabolite biosynthesis; terpenoid biosynthesis. In terms of biological role, sesquiterpene synthase involved in the production of viridiflorene from (E,E)-farnesyl diphosphate (FPP). Has no activity with (Z,Z)-FPP. Can act with a low efficiency as a monoterpene synthase with geranyl diphosphate as substrate. The polypeptide is Sesquiterpene synthase 31 (Solanum lycopersicum (Tomato)).